Reading from the N-terminus, the 474-residue chain is MASVSSSPSYSSQAAVLLLLHQPPHQHGHGGACLRYRGSQSQGRGNAVATSLGLSAAGRGGAGGLLLLPPLPALRAAEGKDGRAVTKDEEEEAAAAAVEEEGEVEVRREEDKPGDDGSREAAARGSGSGRFSADYISLGIREPVYEVIEVKSNGRMSTKKISRRQLLKSSGLRLRDTRSVDPSLWLMNSMPSLLVREQAILVNLGSLRAIAMHERVLIFNYNSPGGKAFLDSLLPRLNPRNINGGPAMPFQLEVVEAALLSRIQRLERRLMRIEPRVGALLEVLPNRLTADVLEQLRLSKQALVELGSRAGDLKQMLIDLLDDPHEIRRICIMGRNCTLDKLSDNMECSVPLEKQIAEEEEEEIEMLLENYLQRCESIHGQAERLLDSAREMEDSIAVNLSSRRLEVSRVELLLQVGTFCVAIGALIAGIFGMNLKSYLETNAWAFWATTGGIVVGAVAGFFIMYSYLKTRKIL.

A chloroplast-targeting transit peptide spans 1–55 (MASVSSSPSYSSQAAVLLLLHQPPHQHGHGGACLRYRGSQSQGRGNAVATSLGLS). Residues 79–129 (GKDGRAVTKDEEEEAAAAAVEEEGEVEVRREEDKPGDDGSREAAARGSGSG) form a disordered region. The span at 88-103 (DEEEEAAAAAVEEEGE) shows a compositional bias: acidic residues. A compositionally biased stretch (basic and acidic residues) spans 104 to 122 (VEVRREEDKPGDDGSREAA). 2 consecutive transmembrane segments (helical) span residues 412–432 (LLLQ…GIFG) and 444–464 (WAFW…FFIM). Positions 432–434 (GMN) match the Required for magnesium transport activity motif.

Belongs to the CorA metal ion transporter (MIT) (TC 1.A.35.5) family.

The protein localises to the plastid. The protein resides in the chloroplast membrane. In terms of biological role, magnesium transporter that may mediate the influx of magnesium in chloroplast. In Oryza sativa subsp. japonica (Rice), this protein is Magnesium transporter MRS2-A, chloroplastic (MRS2-A).